A 547-amino-acid polypeptide reads, in one-letter code: DEAD-box ATP-dependent RNA helicase 31 (547 aa).

Positions 1–34 (MFDFGLSEDDSELGEVDEDDGPSGFEDDLFDDEG) are enriched in acidic residues. The segment at 1–74 (MFDFGLSEDD…HTRESGGGDS (74 aa)) is disordered. A compositionally biased stretch (basic and acidic residues) spans 53–70 (IKGEPIDQEGVVHTRESG). Residues 79–107 (TRFDECSLSPLTLKGVKAAGYERMTAVQE) carry the Q motif motif. In terms of domain architecture, Helicase ATP-binding spans 110–293 (LPIILKGKDV…HIAMKRDLEF (184 aa)). Residue 123 to 130 (AKTGTGKT) participates in ATP binding. The short motif at 241–244 (DEAD) is the DEAD box element. Positions 327 to 478 (LLTDHISENV…TKRKVEKALA (152 aa)) constitute a Helicase C-terminal domain.

It belongs to the DEAD box helicase family.

It carries out the reaction ATP + H2O = ADP + phosphate + H(+). This is DEAD-box ATP-dependent RNA helicase 31 from Oryza sativa subsp. japonica (Rice).